We begin with the raw amino-acid sequence, 317 residues long: MKVALLGAAGGIGQTLALLLKLRLPVGTDLALYDISPVTPGIAVDISHIPTSVSAVGYSGEDPSEALKGANLVIITAGVARKPGMTRADLFNINADIVKNLVEKVAEVCPKACIGIVTNPVNTLVPIAAEVLRKAGVYDKRKLFGVTTLDVVRAKTFTSELKEKHVETVKVPVIGGHSGPTILPLLSQALSEGLPLSFTQEEIEALTYRIQNAGTEVVEAKAGGGSATLSMAESGARFAVAVFKALLGEDCVRYAYVESKEGSGYPEFFAHPVRFGLTGVEELLPIGKLSEYEQAKLDELKPVLEADIALGKNFVNP.

Residues 7–13 (GAAGGIG) and Asp-34 contribute to the NAD(+) site. Substrate-binding residues include Arg-81 and Arg-87. Residues Asn-94 and 117–119 (VTN) each bind NAD(+). Residues Asn-119 and Arg-153 each coordinate substrate. His-177 (proton acceptor) is an active-site residue. Met-231 contributes to the NAD(+) binding site.

This sequence belongs to the LDH/MDH superfamily. MDH type 1 family. In terms of assembly, homodimer.

It catalyses the reaction (S)-malate + NAD(+) = oxaloacetate + NADH + H(+). In terms of biological role, catalyzes the reversible oxidation of malate to oxaloacetate. The chain is Malate dehydrogenase from Actinobacillus pleuropneumoniae serotype 7 (strain AP76).